An 86-amino-acid polypeptide reads, in one-letter code: Mitochondrial import inner membrane translocase subunit Tim10 (86 aa).

A Twin CX3C motif motif is present at residues 29-54; the sequence is CQAKCIATAFRESELTKGEAVCLDRC. 2 cysteine pairs are disulfide-bonded: Cys29–Cys54 and Cys33–Cys50.

This sequence belongs to the small Tim family. In terms of assembly, heterohexamer; composed of 3 copies of tim-9/tin-9.1 and 3 copies of tim-10/tin-10, named soluble 70 kDa complex. The complex associates with the tim-22 component of the TIM22 complex. Interacts with multi-pass transmembrane proteins in transit.

The protein localises to the mitochondrion inner membrane. Functionally, mitochondrial intermembrane chaperone that participates in the import and insertion of multi-pass transmembrane proteins into the mitochondrial inner membrane. May also be required for the transfer of beta-barrel precursors from the TOM complex to the sorting and assembly machinery (SAM complex) of the outer membrane. Acts as a chaperone-like protein that protects the hydrophobic precursors from aggregation and guide them through the mitochondrial intermembrane space. The chain is Mitochondrial import inner membrane translocase subunit Tim10 (tin-10) from Caenorhabditis elegans.